Here is a 317-residue protein sequence, read N- to C-terminus: tRNA dimethylallyltransferase (317 aa).

14 to 21 (GPTAVGKT) contacts ATP. 16 to 21 (TAVGKT) contacts substrate. The tract at residues 39 to 42 (DSMQ) is interaction with substrate tRNA.

Belongs to the IPP transferase family. As to quaternary structure, monomer. The cofactor is Mg(2+).

The enzyme catalyses adenosine(37) in tRNA + dimethylallyl diphosphate = N(6)-dimethylallyladenosine(37) in tRNA + diphosphate. In terms of biological role, catalyzes the transfer of a dimethylallyl group onto the adenine at position 37 in tRNAs that read codons beginning with uridine, leading to the formation of N6-(dimethylallyl)adenosine (i(6)A). The sequence is that of tRNA dimethylallyltransferase from Bacillus cereus (strain AH187).